The primary structure comprises 298 residues: Replication protein A 32 kDa subunit B (298 aa).

The segment at residues 89-163 is a DNA-binding region (OB); it reads VRLVGRMLNK…QVVAYSVRRI (75 aa).

Belongs to the replication factor A protein 2 family. As to quaternary structure, heterotrimer of RPA1, RPA2 and RPA3 (canonical replication protein A complex). Interacts with RPA1A and RPA3. Post-translationally, phosphorylated in a cell-cycle-dependent manner (from the S phase until mitosis). In response to DNA damage, recruited to DNA-repair nuclear foci, as a hypophosphorylated form.

The protein resides in the nucleus. In terms of biological role, component of the replication protein A complex (RPA) required for DNA recombination, repair and replication. The activity of RPA is mediated by single-stranded DNA binding and protein interactions. This is Replication protein A 32 kDa subunit B (RPA2B) from Oryza sativa subsp. japonica (Rice).